A 410-amino-acid chain; its full sequence is Subtilisin-like protease CPC735_003880 (410 aa).

The N-terminal stretch at 1 to 17 (MKLLKSSLLLLLPFVTA) is a signal peptide. Residues 18 to 118 (NPIPSEDKDI…VTPDRKVYLA (101 aa)) constitute a propeptide that is removed on maturation. The Inhibitor I9 domain occupies 31 to 118 (RYIVTLKDGI…VTPDRKVYLA (88 aa)). Positions 127–410 (GYNLGHMSSK…IQEMNETVIA (284 aa)) constitute a Peptidase S8 domain. Residue Asp-159 is the Charge relay system of the active site. N-linked (GlcNAc...) asparagine glycosylation occurs at Asn-182. The active-site Charge relay system is the His-191. N-linked (GlcNAc...) asparagine glycans are attached at residues Asn-238, Asn-251, and Asn-338. Ser-347 acts as the Charge relay system in catalysis. N-linked (GlcNAc...) asparagine glycosylation is present at Asn-405.

It belongs to the peptidase S8 family.

The protein localises to the secreted. Secreted subtilisin-like serine protease with keratinolytic activity that contributes to pathogenicity. This is Subtilisin-like protease CPC735_003880 from Coccidioides posadasii (strain C735) (Valley fever fungus).